We begin with the raw amino-acid sequence, 124 residues long: Small ribosomal subunit protein uS12c (124 aa).

This sequence belongs to the universal ribosomal protein uS12 family. Part of the 30S ribosomal subunit.

The protein localises to the plastid. It localises to the chloroplast. Its function is as follows. With S4 and S5 plays an important role in translational accuracy. Located at the interface of the 30S and 50S subunits. The polypeptide is Small ribosomal subunit protein uS12c (rps12) (Oryza nivara (Indian wild rice)).